A 107-amino-acid polypeptide reads, in one-letter code: Ferredoxin-6 (107 aa).

Residues 2–106 form the 2Fe-2S ferredoxin-type domain; sequence AKIIFIEHNG…GLVVHLPEKQ (105 aa). Residues Cys-40, Cys-46, Cys-49, and Cys-87 each coordinate [2Fe-2S] cluster.

The protein belongs to the adrenodoxin/putidaredoxin family. [2Fe-2S] cluster serves as cofactor.

In terms of biological role, ferredoxins are small electron carrier proteins that participate in various redox reactions. FdVI is an essential protein required for growth of R.capsulatus. May be involved in Fe-S cluster assembly. The chain is Ferredoxin-6 from Rhodobacter capsulatus (Rhodopseudomonas capsulata).